The following is a 476-amino-acid chain: Bifunctional protein HldE (476 aa).

The interval 1–318 (MKVTLPEFER…ENAVRGRADT (318 aa)) is ribokinase. 195-198 (NLSE) contacts ATP. D264 is an active-site residue. Positions 344–476 (MTNGVFDILH…IIKKIQKDSQ (133 aa)) are cytidylyltransferase.

In the N-terminal section; belongs to the carbohydrate kinase PfkB family. This sequence in the C-terminal section; belongs to the cytidylyltransferase family. Homodimer.

The catalysed reaction is D-glycero-beta-D-manno-heptose 7-phosphate + ATP = D-glycero-beta-D-manno-heptose 1,7-bisphosphate + ADP + H(+). It catalyses the reaction D-glycero-beta-D-manno-heptose 1-phosphate + ATP + H(+) = ADP-D-glycero-beta-D-manno-heptose + diphosphate. It functions in the pathway nucleotide-sugar biosynthesis; ADP-L-glycero-beta-D-manno-heptose biosynthesis; ADP-L-glycero-beta-D-manno-heptose from D-glycero-beta-D-manno-heptose 7-phosphate: step 1/4. The protein operates within nucleotide-sugar biosynthesis; ADP-L-glycero-beta-D-manno-heptose biosynthesis; ADP-L-glycero-beta-D-manno-heptose from D-glycero-beta-D-manno-heptose 7-phosphate: step 3/4. Functionally, catalyzes the phosphorylation of D-glycero-D-manno-heptose 7-phosphate at the C-1 position to selectively form D-glycero-beta-D-manno-heptose-1,7-bisphosphate. In terms of biological role, catalyzes the ADP transfer from ATP to D-glycero-beta-D-manno-heptose 1-phosphate, yielding ADP-D-glycero-beta-D-manno-heptose. This is Bifunctional protein HldE from Enterobacter sp. (strain 638).